Reading from the N-terminus, the 171-residue chain is Vimentin-type intermediate filament-associated coiled-coil protein (171 aa).

Residues 7 to 98 are a coiled coil; it reads LQIREANAHL…QRDQMIQELQ (92 aa). The segment at 126–171 is disordered; it reads ELGPLPSSHSHGAQLLPDGPGPPLGNSMREEEGQDDQQPAVFGTTV.

As to expression, expressed in brain, heart, kidney, liver, lung, skeletal muscle, spleen and testis. Within the kidney expression is pronounced within glomeruli.

It is found in the cytoplasm. In Rattus norvegicus (Rat), this protein is Vimentin-type intermediate filament-associated coiled-coil protein (Vmac).